A 490-amino-acid polypeptide reads, in one-letter code: NADP-reducing hydrogenase subunit HndC (490 aa).

2 4Fe-4S ferredoxin-type domains span residues 433 to 462 and 463 to 490; these read LTYT…GTKK and QPHT…IIKQ.

This sequence belongs to the complex I 51 kDa subunit family. In terms of assembly, heterotetramer composed of HndA, HndB, HndC and HndD subunits. HndC is probably the reducing subunit.

It carries out the reaction H2 + NADP(+) = NADPH + H(+). Inhibited by oxygen. Catalyzes the reduction of NADP in the presence of molecular H2 to yield NADPH. In Solidesulfovibrio fructosivorans (Desulfovibrio fructosivorans), this protein is NADP-reducing hydrogenase subunit HndC (hndC).